A 350-amino-acid chain; its full sequence is Heat-inducible transcription repressor HrcA (350 aa).

It belongs to the HrcA family.

Its function is as follows. Negative regulator of class I heat shock genes (grpE-dnaK-dnaJ and groELS operons). Prevents heat-shock induction of these operons. In Xanthomonas euvesicatoria pv. vesicatoria (strain 85-10) (Xanthomonas campestris pv. vesicatoria), this protein is Heat-inducible transcription repressor HrcA.